The sequence spans 137 residues: Small ribosomal subunit protein uS9 (137 aa).

Residues 104-137 (PLKSEGYLTRDPRAKERKKYGLHKARKAPQYSKR) form a disordered region. The segment covering 118–137 (KERKKYGLHKARKAPQYSKR) has biased composition (basic residues).

This sequence belongs to the universal ribosomal protein uS9 family.

The protein is Small ribosomal subunit protein uS9 of Gloeothece citriformis (strain PCC 7424) (Cyanothece sp. (strain PCC 7424)).